The chain runs to 307 residues: Holliday junction branch migration complex subunit RuvB (307 aa).

Positions 1-167 are large ATPase domain (RuvB-L); that stretch reads MKLQIKPPNT…FGVILNINYY (167 aa). ATP-binding residues include I5, G48, K51, T52, T53, R157, Y167, and R204. T52 is a Mg(2+) binding site. The small ATPAse domain (RuvB-S) stretch occupies residues 168 to 233; sequence SNAEIEKMVS…DLEGLFKNLM (66 aa). A head domain (RuvB-H) region spans residues 236 to 307; it reads KNGLQSIDVQ…NSGREYLVNF (72 aa). Positions 270, 289, and 294 each coordinate DNA.

This sequence belongs to the RuvB family. As to quaternary structure, homohexamer. Forms an RuvA(8)-RuvB(12)-Holliday junction (HJ) complex. HJ DNA is sandwiched between 2 RuvA tetramers; dsDNA enters through RuvA and exits via RuvB. An RuvB hexamer assembles on each DNA strand where it exits the tetramer. Each RuvB hexamer is contacted by two RuvA subunits (via domain III) on 2 adjacent RuvB subunits; this complex drives branch migration. In the full resolvosome a probable DNA-RuvA(4)-RuvB(12)-RuvC(2) complex forms which resolves the HJ.

Its subcellular location is the cytoplasm. The catalysed reaction is ATP + H2O = ADP + phosphate + H(+). Its function is as follows. The RuvA-RuvB-RuvC complex processes Holliday junction (HJ) DNA during genetic recombination and DNA repair, while the RuvA-RuvB complex plays an important role in the rescue of blocked DNA replication forks via replication fork reversal (RFR). RuvA specifically binds to HJ cruciform DNA, conferring on it an open structure. The RuvB hexamer acts as an ATP-dependent pump, pulling dsDNA into and through the RuvAB complex. RuvB forms 2 homohexamers on either side of HJ DNA bound by 1 or 2 RuvA tetramers; 4 subunits per hexamer contact DNA at a time. Coordinated motions by a converter formed by DNA-disengaged RuvB subunits stimulates ATP hydrolysis and nucleotide exchange. Immobilization of the converter enables RuvB to convert the ATP-contained energy into a lever motion, pulling 2 nucleotides of DNA out of the RuvA tetramer per ATP hydrolyzed, thus driving DNA branch migration. The RuvB motors rotate together with the DNA substrate, which together with the progressing nucleotide cycle form the mechanistic basis for DNA recombination by continuous HJ branch migration. Branch migration allows RuvC to scan DNA until it finds its consensus sequence, where it cleaves and resolves cruciform DNA. The chain is Holliday junction branch migration complex subunit RuvB from Mycoplasma genitalium (strain ATCC 33530 / DSM 19775 / NCTC 10195 / G37) (Mycoplasmoides genitalium).